Reading from the N-terminus, the 507-residue chain is Glucose-6-phosphate isomerase (507 aa).

Glutamate 338 acts as the Proton donor in catalysis. Residues histidine 369 and lysine 479 contribute to the active site.

Belongs to the GPI family.

The protein resides in the cytoplasm. It catalyses the reaction alpha-D-glucose 6-phosphate = beta-D-fructose 6-phosphate. It participates in carbohydrate biosynthesis; gluconeogenesis. The protein operates within carbohydrate degradation; glycolysis; D-glyceraldehyde 3-phosphate and glycerone phosphate from D-glucose: step 2/4. Provides a gateway for fructose into the Entner-Doudouroff pathway. Its function is as follows. Catalyzes the reversible isomerization of glucose-6-phosphate to fructose-6-phosphate. The polypeptide is Glucose-6-phosphate isomerase (Zymomonas mobilis subsp. mobilis (strain ATCC 31821 / ZM4 / CP4)).